The sequence spans 445 residues: Serine/threonine-protein kinase Nek2 (445 aa).

One can recognise a Protein kinase domain in the interval 8 to 271 (YEVLYTIGTG…VEEILENPLI (264 aa)). ATP contacts are provided by residues 14 to 22 (IGTGSYGRC) and Lys-37. Asp-141 acts as the Proton acceptor in catalysis. Phosphothreonine; by autocatalysis is present on Thr-170. A Phosphoserine; by autocatalysis modification is found at Ser-171. Residues Thr-175 and Thr-179 each carry the phosphothreonine; by autocatalysis modification. At Ser-184 the chain carries Phosphoserine. Ser-241 carries the phosphoserine; by autocatalysis modification. The tract at residues 264–445 (EILENPLIAD…LKSRQILGMR (182 aa)) is interaction with PCNT. Ser-296 and Ser-300 each carry phosphoserine. Residues 301–445 (PVLSELKLKE…LKSRQILGMR (145 aa)) form an interaction with CEP85 region. A coiled-coil region spans residues 303-362 (LSELKLKEIQLQERERALKAREERLEQKEQELCVRERLAEDKLARAENLLKNYSLLKERK). The segment at 306–334 (LKLKEIQLQERERALKAREERLEQKEQEL) is leucine-zipper. Residues 329–445 (QKEQELCVRE…LKSRQILGMR (117 aa)) form a necessary for interaction with MAD1L1 region. Residues 333–370 (ELCVRERLAEDKLARAENLLKNYSLLKERKFLSLASNP) are required for microtubule binding and for localization to the centrosomes. Ser-356 and Ser-365 each carry phosphoserine; by STK3/MST2. 4 positions are modified to phosphoserine: Ser-387, Ser-390, Ser-397, and Ser-402. The tract at residues 403-439 (QLTSKSKCKDLKKRLHAAQLRAQALSDIEKNYQLKSR) is interaction with SAV1 and STK3/MST2. A Phosphoserine; by STK3/MST2 modification is found at Ser-406. Residues 406-430 (SKSKCKDLKKRLHAAQLRAQALSDI) adopt a coiled-coil conformation. Ser-428 carries the post-translational modification Phosphoserine. Phosphoserine; by STK3/MST2 is present on Ser-438.

This sequence belongs to the protein kinase superfamily. NEK Ser/Thr protein kinase family. NIMA subfamily. In terms of assembly, isoform 1, isoform 2 and isoform 4 form homo- and heterodimers. Interacts with NECAB3 and HMGA2. Isoform 1 interacts with CDC20, CTNB1, MAD1L1, MAPK, NEK11, NPM1, NDC80, PCNT and SGO1. Isoform 1 interacts with STK3/MST2 (via SARAH domain) and SAV1 (via SARAH domain). Isoform 1 and isoform 2 interact with MAD2L1. Isoform 1 and isoform 4 interact with PPP1CA and PPP1CC. Interacts with CEP68; the interaction leads to phosphorylation of CEP68. Interacts with CNTLN; the interaction leads to phosphorylation of CNTLN. Isoform 1 interacts with CEP85. Interacts with CCDC102B; the interaction leads to phosphorylation of CCDC102B. Mg(2+) is required as a cofactor. Activated by autophosphorylation. Protein phosphatase 1 represses autophosphorylation and activation of isoform 1 by dephosphorylation. Phosphorylation by STK3/MST2 is necessary for its localization to the centrosome. In terms of tissue distribution, isoform 1 and isoform 2 are expressed in peripheral blood T-cells and a wide variety of transformed cell types. Isoform 1 and isoform 4 are expressed in the testis. Up-regulated in various cancer cell lines, as well as primary breast tumors.

Its subcellular location is the nucleus. It localises to the nucleolus. The protein resides in the cytoplasm. The protein localises to the cytoskeleton. It is found in the microtubule organizing center. Its subcellular location is the centrosome. It localises to the spindle pole. The protein resides in the chromosome. The protein localises to the centromere. It is found in the kinetochore. The catalysed reaction is L-seryl-[protein] + ATP = O-phospho-L-seryl-[protein] + ADP + H(+). The enzyme catalyses L-threonyl-[protein] + ATP = O-phospho-L-threonyl-[protein] + ADP + H(+). With respect to regulation, isoform 1 is inhibited by ionizing radiation in the presence of PPP1CA. Its catalytic activity is inhibited by the inhibitor CCT241950. In the presence of this inhibitor, displays an autoinhibited conformation: Tyr-70 side chain points into the active site, interacts with the activation loop, and blocks the alphaC helix. Protein kinase which is involved in the control of centrosome separation and bipolar spindle formation in mitotic cells and chromatin condensation in meiotic cells. Regulates centrosome separation (essential for the formation of bipolar spindles and high-fidelity chromosome separation) by phosphorylating centrosomal proteins such as CROCC, CEP250 and NINL, resulting in their displacement from the centrosomes. Regulates kinetochore microtubule attachment stability in mitosis via phosphorylation of NDC80. Involved in regulation of mitotic checkpoint protein complex via phosphorylation of CDC20 and MAD2L1. Plays an active role in chromatin condensation during the first meiotic division through phosphorylation of HMGA2. Phosphorylates: PPP1CC; SGO1; NECAB3 and NPM1. Essential for localization of MAD2L1 to kinetochore and MAPK1 and NPM1 to the centrosome. Phosphorylates CEP68 and CNTLN directly or indirectly. NEK2-mediated phosphorylation of CEP68 promotes CEP68 dissociation from the centrosome and its degradation at the onset of mitosis. Involved in the regulation of centrosome disjunction. Phosphorylates CCDC102B either directly or indirectly which causes CCDC102B to dissociate from the centrosome and allows for centrosome separation. In terms of biological role, phosphorylates and activates NEK11 in G1/S-arrested cells. Its function is as follows. Not present in the nucleolus and, in contrast to isoform 1, does not phosphorylate and activate NEK11 in G1/S-arrested cells. The polypeptide is Serine/threonine-protein kinase Nek2 (NEK2) (Homo sapiens (Human)).